We begin with the raw amino-acid sequence, 612 residues long: uncharacterized protein (612 aa).

Positions 39–100 (ERDHNLWEIE…KNISVKDLDE (62 aa)) form a coiled coil. A disordered region spans residues 219-241 (PLSSGESLPKKEEEVTKSPSFTL). WD repeat units follow at residues 286–325 (TSTQ…NDNS), 337–376 (GHEG…TSDS), 389–432 (GHED…FKIR), 434–470 (DSKQ…LVSQ), 483–523 (AVKD…LLAE), 526–565 (ISKV…STLE), and 574–612 (EEIT…KYLP).

It is found in the cytoplasm. This is an uncharacterized protein from Schizosaccharomyces pombe (strain 972 / ATCC 24843) (Fission yeast).